A 437-amino-acid polypeptide reads, in one-letter code: Probable carboxypeptidase HCBG_00059 (437 aa).

An N-terminal signal peptide occupies residues 1-20 (MKLSNLAALLSASTVAPVAA). N153 carries N-linked (GlcNAc...) asparagine glycosylation. Residue D163 coordinates Zn(2+). The active-site Proton acceptor is E195. E196 contributes to the Zn(2+) binding site. N346 is a glycosylation site (N-linked (GlcNAc...) asparagine).

It belongs to the peptidase M20A family. Zn(2+) serves as cofactor.

The protein localises to the secreted. This is Probable carboxypeptidase HCBG_00059 from Ajellomyces capsulatus (strain G186AR / H82 / ATCC MYA-2454 / RMSCC 2432) (Darling's disease fungus).